The following is a 251-amino-acid chain: Flap endonuclease Xni (251 aa).

Residue aspartate 104 coordinates Mg(2+). A 5'-3' exonuclease domain is found at 160 to 249 (VLPRQLPDYW…IDGNLQQLRL (90 aa)). Leucine 171, alanine 172, proline 180, valine 182, and isoleucine 185 together coordinate K(+). An interaction with DNA region spans residues 184-189 (GIGPKS).

The protein belongs to the Xni family. Mg(2+) is required as a cofactor. Requires K(+) as cofactor.

Its function is as follows. Has flap endonuclease activity. During DNA replication, flap endonucleases cleave the 5'-overhanging flap structure that is generated by displacement synthesis when DNA polymerase encounters the 5'-end of a downstream Okazaki fragment. This is Flap endonuclease Xni from Salmonella dublin (strain CT_02021853).